We begin with the raw amino-acid sequence, 155 residues long: Large ribosomal subunit protein uL11 (155 aa).

The protein belongs to the universal ribosomal protein uL11 family. In terms of assembly, part of the ribosomal stalk of the 50S ribosomal subunit. Interacts with L10 and the large rRNA to form the base of the stalk. L10 forms an elongated spine to which L12 dimers bind in a sequential fashion forming a multimeric L10(L12)X complex. One or more lysine residues are methylated.

Forms part of the ribosomal stalk which helps the ribosome interact with GTP-bound translation factors. The sequence is that of Large ribosomal subunit protein uL11 from Malacoplasma penetrans (strain HF-2) (Mycoplasma penetrans).